Consider the following 159-residue polypeptide: Bacterioferritin (159 aa).

Residues 1-145 (MQGDPDVLRL…TQLALMGQLG (145 aa)) enclose the Ferritin-like diiron domain. Positions 18 and 51 each coordinate Fe cation. Met-52 is a heme b binding site. Positions 54, 94, 127, and 130 each coordinate Fe cation.

The protein belongs to the bacterioferritin family. In terms of assembly, homooligomer of 24 subunits, arranged as 12 dimers, that are packed together to form an approximately spherical molecule with a central cavity, in which large amounts of iron can be deposited. The cofactor is heme b.

Its subcellular location is the cytoplasm. It is found in the cytosol. The protein resides in the membrane. The catalysed reaction is 4 Fe(2+) + O2 + 4 H(+) = 4 Fe(3+) + 2 H2O. It carries out the reaction Fe(2+)(in) = Fe(2+)(out). In terms of biological role, iron-storage protein, whose ferroxidase center binds Fe(2+), oxidizes it using dioxygen to Fe(3+), and participates in the subsequent Fe(3+) oxide mineral core formation within the central cavity of the BFR protein shell. Probably plays a crucial role in the intracellular existence of this organism by functioning as a temporary depository for iron in iron deprivation. This chain is Bacterioferritin (bfr), found in Mycobacterium leprae (strain TN).